The following is a 231-amino-acid chain: Ribonuclease HII (231 aa).

An RNase H type-2 domain is found at 33–222 (WPVAGADEAG…FREAQEQPLA (190 aa)). A divalent metal cation is bound by residues aspartate 39, glutamate 40, and aspartate 130.

The protein belongs to the RNase HII family. Mn(2+) serves as cofactor. It depends on Mg(2+) as a cofactor.

The protein resides in the cytoplasm. It catalyses the reaction Endonucleolytic cleavage to 5'-phosphomonoester.. In terms of biological role, endonuclease that specifically degrades the RNA of RNA-DNA hybrids. This Sinorhizobium fredii (strain NBRC 101917 / NGR234) protein is Ribonuclease HII.